We begin with the raw amino-acid sequence, 346 residues long: NADH-ubiquinone oxidoreductase chain 2 (346 aa).

10 helical membrane passes run 3 to 23, 25 to 45, 67 to 87, 96 to 116, 122 to 142, 145 to 165, 200 to 220, 238 to 258, 273 to 293, and 324 to 344; these read PIIFTTILLTIMLGTNNVMIS, HWLLVWIGFEMNMLAIIPIMM, SMLLMMAVIINLMFSGQWTVM, MLMTMALAMKLGMAPFHFWVP, IPLSSGLILLTWQKLAPMSVL, IFPSINLNLILTLSILSILIG, TLLNLIIYITMTSTMFTMFMA, IMTILILATLLSMGGLPPLSG, NSIILPTFMAITALLNLYFYM, and FLPTMVVLSTMTLPLTPMLSV.

The protein belongs to the complex I subunit 2 family. As to quaternary structure, core subunit of respiratory chain NADH dehydrogenase (Complex I) which is composed of 45 different subunits. Interacts with TMEM242.

It localises to the mitochondrion inner membrane. The catalysed reaction is a ubiquinone + NADH + 5 H(+)(in) = a ubiquinol + NAD(+) + 4 H(+)(out). Core subunit of the mitochondrial membrane respiratory chain NADH dehydrogenase (Complex I) which catalyzes electron transfer from NADH through the respiratory chain, using ubiquinone as an electron acceptor. Essential for the catalytic activity and assembly of complex I. The polypeptide is NADH-ubiquinone oxidoreductase chain 2 (Bos mutus grunniens (Wild yak)).